A 264-amino-acid polypeptide reads, in one-letter code: ATP synthase subunit a (264 aa).

Transmembrane regions (helical) follow at residues 29-49, 87-107, 134-154, 177-197, 208-228, and 235-255; these read TWHI…LWIF, NALI…MNFM, DVNI…YYSI, IPVN…SLAL, LIFI…SLGV, and LIFH…LTIV.

The protein belongs to the ATPase A chain family. As to quaternary structure, F-type ATPases have 2 components, CF(1) - the catalytic core - and CF(0) - the membrane proton channel. CF(1) has five subunits: alpha(3), beta(3), gamma(1), delta(1), epsilon(1). CF(0) has three main subunits: a(1), b(2) and c(9-12). The alpha and beta chains form an alternating ring which encloses part of the gamma chain. CF(1) is attached to CF(0) by a central stalk formed by the gamma and epsilon chains, while a peripheral stalk is formed by the delta and b chains.

The protein resides in the cell inner membrane. Functionally, key component of the proton channel; it plays a direct role in the translocation of protons across the membrane. The chain is ATP synthase subunit a from Shewanella sp. (strain MR-4).